We begin with the raw amino-acid sequence, 295 residues long: UDP-N-acetylenolpyruvoylglucosamine reductase (295 aa).

The FAD-binding PCMH-type domain occupies 24-188; that stretch reads KVGGNAEIFF…LKAVFKINKG (165 aa). The active site involves Arg168. The active-site Proton donor is Ser217. Residue Glu287 is part of the active site.

It belongs to the MurB family. FAD is required as a cofactor.

The protein localises to the cytoplasm. It catalyses the reaction UDP-N-acetyl-alpha-D-muramate + NADP(+) = UDP-N-acetyl-3-O-(1-carboxyvinyl)-alpha-D-glucosamine + NADPH + H(+). It participates in cell wall biogenesis; peptidoglycan biosynthesis. In terms of biological role, cell wall formation. The chain is UDP-N-acetylenolpyruvoylglucosamine reductase from Rickettsia massiliae (strain Mtu5).